Here is a 490-residue protein sequence, read N- to C-terminus: RNA-binding protein P (490 aa).

Residues 1-112 (MGKKRKLDSK…EEEEAAERDA (112 aa)) are disordered. The segment covering 13–36 (AAARSAAARAAAAAAAAAAAAAVA) has biased composition (low complexity). Over residues 74–108 (GGEEEEVEEVEVEEEVEVDEDEDGEGEGEEEEEAA) the composition is skewed to acidic residues. RRM domains lie at 156–233 (RKIF…LASV) and 267–343 (RKIF…QKAI).

In terms of assembly, forms homodimers. Interacts with RBP-L and RBP-208. Interacts with NSF.

Its subcellular location is the nucleus. The protein resides in the cytoplasm. RNA-binding protein that binds to a cis-localization element or zipcode, within the 5'-CDS of prolamine RNA. Binds strongly to glutelin mRNA, particularly to 3'-UTR and zipcode RNA. Recognizes and binds to glutelin zipcode RNA, which is required for proper mRNA localization to cisternal endoplasmic reticulum. Exhibits strong binding activity to a glutelin intron sequence and may participate in mRNA splicing. Required for the correct localization of glutelin and prolamine mRNA in endosperm cells during grain development. RBP-P and RBP-L form a quaternary complex with the membrane trafficking factors NSF and RAB5A. This quaternay complex carries glutelin mRNAs for active transport on endosomes to the cortical endoplasmic reticulum membrane, and enables endosome-mediated glutelin mRNA transport in endosperm cells. This Oryza sativa subsp. japonica (Rice) protein is RNA-binding protein P.